The chain runs to 658 residues: CXXC-type zinc finger protein 1 (658 aa).

N-acetylmethionine is present on methionine 1. A compositionally biased stretch (acidic residues) spans methionine 1 to glycine 14. Residues methionine 1 to glutamate 20 form a disordered region. Phosphoserine is present on residues serine 6 and serine 19. The segment at tyrosine 28–lysine 76 adopts a PHD-type zinc-finger fold. The interval tyrosine 84–isoleucine 164 is disordered. The segment covering arginine 90 to arginine 120 has biased composition (basic and acidic residues). Residues glutamine 153 to glutamine 163 show a composition bias toward low complexity. A CXXC-type zinc finger spans residues glutamine 162–glutamine 211. Residues cysteine 171, cysteine 174, cysteine 177, cysteine 183, cysteine 186, cysteine 189, cysteine 205, and cysteine 210 each coordinate Zn(2+). Disordered stretches follow at residues phenylalanine 221–aspartate 285 and valine 327–serine 373. Serine 226 bears the Phosphoserine mark. Threonine 229 bears the Phosphothreonine mark. A Glycyl lysine isopeptide (Lys-Gly) (interchain with G-Cter in SUMO2) cross-link involves residue lysine 252. Positions valine 327–glutamate 336 are enriched in basic residues. Residues lysine 337–tyrosine 347 are compositionally biased toward basic and acidic residues. Over residues lysine 348–tryptophan 360 the composition is skewed to basic residues. Over residues lysine 361–aspartate 370 the composition is skewed to basic and acidic residues. The stretch at glycine 428–glutamate 470 forms a coiled coil.

In terms of assembly, component of the SET1 complex, at least composed of the catalytic subunit (SETD1A or SETD1B), WDR5, WDR82, RBBP5, ASH2L/ASH2, CXXC1/CFP1, HCFC1 and DPY30. Interacts with SETD1A. Interacts with ZNF335. Interacts with PRDM9; this interaction does not link PRDM9-activated recombination hotspot sites with DSB machinery and is not required for the hotspot recognition pathway. Interacts with histone H3K4me3. May be regulated by proteolysis.

Its subcellular location is the nucleus speckle. The protein resides in the nucleus. Its function is as follows. Transcriptional activator that exhibits a unique DNA binding specificity for CpG unmethylated motifs with a preference for CpGG. The polypeptide is CXXC-type zinc finger protein 1 (CXXC1) (Bos taurus (Bovine)).